We begin with the raw amino-acid sequence, 417 residues long: DNA primase small subunit (417 aa).

Residue methionine 1 is modified to N-acetylmethionine. Active-site residues include glutamate 44, aspartate 109, and aspartate 111. Mg(2+) contacts are provided by aspartate 109 and aspartate 111. Mn(2+)-binding residues include aspartate 109 and aspartate 111. An a ribonucleoside 5'-triphosphate-binding site is contributed by 109-111 (DID). Residues cysteine 121, cysteine 122, cysteine 128, and cysteine 131 each coordinate Zn(2+). The Zinc knuckle motif motif lies at 121 to 131 (CCSSADICSKC). An a ribonucleoside 5'-triphosphate-binding site is contributed by 160 to 166 (SGRRGVH). A Mg(2+)-binding site is contributed by aspartate 305. Aspartate 305 is a binding site for Mn(2+). Residues 314–317 (HLLK) and histidine 323 each bind a ribonucleoside 5'-triphosphate.

The protein belongs to the eukaryotic-type primase small subunit family. In terms of assembly, heterodimer of a catalytic subunit PRIM1 and a regulatory subunit PRIM2, also known as the DNA primase complex. Interacts with PRIM2/p58 (via C-terminus). Component of the alpha DNA polymerase complex (also known as the alpha DNA polymerase-primase complex) consisting of four subunits: the catalytic subunit POLA1, the regulatory subunit POLA2, and the primase complex subunits PRIM1 and PRIM2 respectively. Within the complex, POLA1 directly interacts with PRIM2. The cofactor is Mg(2+). Mn(2+) is required as a cofactor.

The enzyme catalyses ssDNA + n NTP = ssDNA/pppN(pN)n-1 hybrid + (n-1) diphosphate.. The presence of the regulatory subunit PRIM2/p58 accelerates the kinetics of initiation and primer extension. Functionally, catalytic subunit of the DNA primase complex and component of the DNA polymerase alpha complex (also known as the alpha DNA polymerase-primase complex) which play an essential role in the initiation of DNA synthesis. During the S phase of the cell cycle, the DNA polymerase alpha complex (composed of a catalytic subunit POLA1, an accessory subunit POLA2 and two primase subunits, the catalytic subunit PRIM1 and the regulatory subunit PRIM2) is recruited to DNA at the replicative forks via direct interactions with MCM10 and WDHD1. The primase subunit of the polymerase alpha complex initiates DNA synthesis by oligomerising short RNA primers on both leading and lagging strands. These primers are initially extended by the polymerase alpha catalytic subunit and subsequently transferred to polymerase delta and polymerase epsilon for processive synthesis on the lagging and leading strand, respectively. In the primase complex, both subunits are necessary for the initial di-nucleotide formation, but the extension of the primer depends only on the catalytic subunit. Can add both ribo- and deoxynucleotides during elongation of the primers. Synthesizes 9-mer RNA primers (also known as the 'unit length' RNA primers). Incorporates only ribonucleotides in the presence of ribo- and deoxy-nucleotide triphosphates (rNTPs, dNTPs). Requires template thymine or cytidine to start the RNA primer synthesis, with an adenine or guanine at its 5'-end. Binds single stranded DNA. The chain is DNA primase small subunit (Prim1) from Mus musculus (Mouse).